A 210-amino-acid chain; its full sequence is Urease accessory protein UreF (210 aa).

This sequence belongs to the UreF family. UreD, UreF and UreG form a complex that acts as a GTP-hydrolysis-dependent molecular chaperone, activating the urease apoprotein by helping to assemble the nickel containing metallocenter of UreC. The UreE protein probably delivers the nickel.

The protein resides in the cytoplasm. In terms of biological role, required for maturation of urease via the functional incorporation of the urease nickel metallocenter. This chain is Urease accessory protein UreF, found in Dinoroseobacter shibae (strain DSM 16493 / NCIMB 14021 / DFL 12).